The primary structure comprises 222 residues: Octanoyltransferase (222 aa).

Positions A34–V214 constitute a BPL/LPL catalytic domain. Residues R72–H79, A144–G146, and G157–A159 each bind substrate. C175 functions as the Acyl-thioester intermediate in the catalytic mechanism.

It belongs to the LipB family.

Its subcellular location is the cytoplasm. It carries out the reaction octanoyl-[ACP] + L-lysyl-[protein] = N(6)-octanoyl-L-lysyl-[protein] + holo-[ACP] + H(+). It functions in the pathway protein modification; protein lipoylation via endogenous pathway; protein N(6)-(lipoyl)lysine from octanoyl-[acyl-carrier-protein]: step 1/2. In terms of biological role, catalyzes the transfer of endogenously produced octanoic acid from octanoyl-acyl-carrier-protein onto the lipoyl domains of lipoate-dependent enzymes. Lipoyl-ACP can also act as a substrate although octanoyl-ACP is likely to be the physiological substrate. This Arthrobacter sp. (strain FB24) protein is Octanoyltransferase.